The following is a 907-amino-acid chain: Alanine--tRNA ligase (907 aa).

Zn(2+)-binding residues include His602, His606, Cys706, and His710.

This sequence belongs to the class-II aminoacyl-tRNA synthetase family. Requires Zn(2+) as cofactor.

The protein localises to the cytoplasm. It catalyses the reaction tRNA(Ala) + L-alanine + ATP = L-alanyl-tRNA(Ala) + AMP + diphosphate. In terms of biological role, catalyzes the attachment of alanine to tRNA(Ala) in a two-step reaction: alanine is first activated by ATP to form Ala-AMP and then transferred to the acceptor end of tRNA(Ala). Also edits incorrectly charged Ser-tRNA(Ala) and Gly-tRNA(Ala) via its editing domain. The polypeptide is Alanine--tRNA ligase (Thermofilum pendens (strain DSM 2475 / Hrk 5)).